Here is a 519-residue protein sequence, read N- to C-terminus: AAA-ATPase At4g30250 (519 aa).

The first 24 residues, 1–24, serve as a signal peptide directing secretion; the sequence is MSDYWTTMASLLGMLAFCQTIVQL. 252–259 serves as a coordination point for ATP; that stretch reads GPPGTGKS. 2 disordered regions span residues 315 to 335 and 467 to 519; these read GKNK…NGSG and KSVG…EKEK. Positions 479–488 are enriched in acidic residues; sequence QEEEEEAEEE. Residues 489 to 508 are compositionally biased toward basic and acidic residues; it reads QEKRALDSPNRRNREVCGFR. Residues 509 to 519 show a composition bias toward acidic residues; it reads EEEEEEDEKEK.

This sequence belongs to the AAA ATPase family. BCS1 subfamily. Mg(2+) serves as cofactor.

The catalysed reaction is ATP + H2O = ADP + phosphate + H(+). The chain is AAA-ATPase At4g30250 from Arabidopsis thaliana (Mouse-ear cress).